A 470-amino-acid chain; its full sequence is ATP synthase subunit beta (470 aa).

158-165 lines the ATP pocket; sequence GGAGVGKT.

This sequence belongs to the ATPase alpha/beta chains family. In terms of assembly, F-type ATPases have 2 components, CF(1) - the catalytic core - and CF(0) - the membrane proton channel. CF(1) has five subunits: alpha(3), beta(3), gamma(1), delta(1), epsilon(1). CF(0) has three main subunits: a(1), b(2) and c(9-12). The alpha and beta chains form an alternating ring which encloses part of the gamma chain. CF(1) is attached to CF(0) by a central stalk formed by the gamma and epsilon chains, while a peripheral stalk is formed by the delta and b chains.

It localises to the cell membrane. The catalysed reaction is ATP + H2O + 4 H(+)(in) = ADP + phosphate + 5 H(+)(out). Produces ATP from ADP in the presence of a proton gradient across the membrane. The catalytic sites are hosted primarily by the beta subunits. This is ATP synthase subunit beta from Shouchella clausii (strain KSM-K16) (Alkalihalobacillus clausii).